A 433-amino-acid chain; its full sequence is 3-phosphoshikimate 1-carboxyvinyltransferase (433 aa).

The 3-phosphoshikimate site is built by Lys-15, Ser-16, and Arg-20. Lys-15 is a phosphoenolpyruvate binding site. Residues Gly-96 and Arg-124 each contribute to the phosphoenolpyruvate site. Ser-169, Gln-171, Asp-318, and Lys-345 together coordinate 3-phosphoshikimate. Gln-171 contributes to the phosphoenolpyruvate binding site. Asp-318 serves as the catalytic Proton acceptor. The phosphoenolpyruvate site is built by Arg-349 and Arg-393.

Belongs to the EPSP synthase family. In terms of assembly, monomer.

The protein resides in the cytoplasm. It carries out the reaction 3-phosphoshikimate + phosphoenolpyruvate = 5-O-(1-carboxyvinyl)-3-phosphoshikimate + phosphate. It participates in metabolic intermediate biosynthesis; chorismate biosynthesis; chorismate from D-erythrose 4-phosphate and phosphoenolpyruvate: step 6/7. In terms of biological role, catalyzes the transfer of the enolpyruvyl moiety of phosphoenolpyruvate (PEP) to the 5-hydroxyl of shikimate-3-phosphate (S3P) to produce enolpyruvyl shikimate-3-phosphate and inorganic phosphate. The sequence is that of 3-phosphoshikimate 1-carboxyvinyltransferase from Chlorobium phaeovibrioides (strain DSM 265 / 1930) (Prosthecochloris vibrioformis (strain DSM 265)).